A 61-amino-acid polypeptide reads, in one-letter code: Small ribosomal subunit protein uS14 (61 aa).

Positions 24, 27, 40, and 43 each coordinate Zn(2+).

The protein belongs to the universal ribosomal protein uS14 family. Zinc-binding uS14 subfamily. In terms of assembly, part of the 30S ribosomal subunit. Contacts proteins S3 and S10. Requires Zn(2+) as cofactor.

Its function is as follows. Binds 16S rRNA, required for the assembly of 30S particles and may also be responsible for determining the conformation of the 16S rRNA at the A site. This chain is Small ribosomal subunit protein uS14, found in Coprothermobacter proteolyticus (strain ATCC 35245 / DSM 5265 / OCM 4 / BT).